The following is a 434-amino-acid chain: A-adding tRNA nucleotidyltransferase (434 aa).

20-23 (GAVR) provides a ligand contact to ATP. Residues aspartate 33 and aspartate 35 each coordinate Mg(2+). ATP contacts are provided by residues 91–92 (RD), asparagine 96, 132–141 (DPLRAWRAAR), and arginine 177. The 113-residue stretch at 227–339 (VFEHGVEALH…ELLPDLLSLM (113 aa)) folds into the HD domain.

Belongs to the tRNA nucleotidyltransferase/poly(A) polymerase family. The cofactor is Mg(2+).

The enzyme catalyses a tRNA with a 3' CC end + ATP = a tRNA with a 3' CCA end + diphosphate. TRNA nucleotidyltransferase involved in the synthesis of the tRNA CCA terminus. Adds the terminal adenosine residue to tRNA. The sequence is that of A-adding tRNA nucleotidyltransferase from Deinococcus radiodurans (strain ATCC 13939 / DSM 20539 / JCM 16871 / CCUG 27074 / LMG 4051 / NBRC 15346 / NCIMB 9279 / VKM B-1422 / R1).